We begin with the raw amino-acid sequence, 404 residues long: Ammonium transporter (404 aa).

9 helical membrane passes run 7-27 (VFMF…ALFY), 44-64 (FSSI…LAFA), 96-116 (LFMM…SGAF), 125-145 (FLLF…HWVW), 158-178 (FAGG…LAIV), 227-247 (INTN…EWII), 254-274 (LGAV…AGFV), 277-297 (FASI…VFSL), and 352-372 (IVAI…IIKI).

Belongs to the ammonia transporter channel (TC 1.A.11.2) family. In terms of assembly, interacts with NrgB for a correct localization of the latter. GlnK-AmtB complex interacts with TnrA.

Its subcellular location is the cell membrane. Its function is as follows. Functions as an ammonium and methylammonium transporter in the absence of glutamine. Required for ammonium utilization at low concentrations or at low pH values, when ammonium is the single nitrogen source. Required for binding of NrgB to the membrane. Interaction between GlnK-AmtB complex and TnrA protects TnrA from proteolytic degradation. In Bacillus subtilis (strain 168), this protein is Ammonium transporter.